Consider the following 172-residue polypeptide: 16S rRNA aminocarboxypropyltransferase (172 aa).

Positions 21, 71, 93, and 112 each coordinate S-adenosyl-L-methionine.

The protein belongs to the TDD superfamily. TSR3 family.

Its subcellular location is the cytoplasm. The catalysed reaction is an N(1)-methylpseudouridine in rRNA + S-adenosyl-L-methionine = N(1)-methyl-N(3)-[(3S)-3-amino-3-carboxypropyl]pseudouridine in rRNA + S-methyl-5'-thioadenosine + H(+). Aminocarboxypropyltransferase that catalyzes the aminocarboxypropyl transfer on pseudouridine at position 914 in 16S rRNA. It constitutes the last step in biosynthesis of the hypermodified N1-methyl-N3-(3-amino-3-carboxypropyl) pseudouridine (m1acp3-Psi). The sequence is that of 16S rRNA aminocarboxypropyltransferase from Methanocaldococcus jannaschii (strain ATCC 43067 / DSM 2661 / JAL-1 / JCM 10045 / NBRC 100440) (Methanococcus jannaschii).